A 1171-amino-acid chain; its full sequence is Protein diaphanous homolog 3 (1171 aa).

Residues 1–15 (MERHRARALGRDSKS) show a composition bias toward basic and acidic residues. The tract at residues 1–40 (MERHRARALGRDSKSSRRKGLQSAPPAGPYEPGEKRPKLH) is disordered. The short motif at 16-39 (SRRKGLQSAPPAGPYEPGEKRPKL) is the Nuclear localization signal element. T47 is subject to Phosphothreonine. At S56 the chain carries Phosphoserine. Residues 60–95 (PGSKKERPPLPHLKTVSGISDSSSLSSETMENNPKA) are disordered. The span at 76–86 (SGISDSSSLSS) shows a compositional bias: low complexity. The GBD/FH3 domain occupies 93–455 (PKALPESEVL…QIVLHRDGTD (363 aa)). Position 154 is a phosphoserine (S154). Coiled-coil stretches lie at residues 373–403 (EHKE…YSML) and 478–533 (QAKL…FGAL). The tract at residues 532 to 601 (ALPPGTKIPL…PPPPLGFLGG (70 aa)) is disordered. The FH1 domain occupies 540–610 (PLQPSVEGEA…GQSSIPLNLP (71 aa)). Residues 553-596 (ALPPAPPALSGGVPPPPPPPPPPPPPLPGMPMPFGGPVPPPPPL) show a composition bias toward pro residues. The residue at position 604 (S604) is a Phosphoserine. In terms of domain architecture, FH2 spans 615 to 1013 (PKKEFKPEIS…EKRARIAKER (399 aa)). Coiled coils occupy residues 887-918 (DKAS…LETF) and 988-1038 (MLAL…GDET). Positions 1036-1066 (DETGVMDSLLEALQSGAAFRDRRKRTPKLKD) constitute a DAD domain. Phosphoserine is present on residues S1072 and S1157. A Nuclear export signal motif is present at residues 1162–1171 (EALLARLRAL).

Belongs to the formin homology family. Diaphanous subfamily. In terms of processing, ubiquitinated.

The protein resides in the cytoplasm. Its subcellular location is the nucleus. Actin nucleation and elongation factor required for the assembly of F-actin structures, such as actin cables and stress fibers. Required for cytokinesis, stress fiber formation and transcriptional activation of the serum response factor. Binds to GTP-bound form of Rho and to profilin: acts in a Rho-dependent manner to recruit profilin to the membrane, where it promotes actin polymerization. DFR proteins couple Rho and Src tyrosine kinase during signaling and the regulation of actin dynamics. Also acts as an actin nucleation and elongation factor in the nucleus by promoting nuclear actin polymerization inside the nucleus to drive serum-dependent SRF-MRTFA activity. The chain is Protein diaphanous homolog 3 (Diaph3) from Mus musculus (Mouse).